The chain runs to 426 residues: uncharacterized protein (426 aa).

3 Solcar repeats span residues 125 to 216, 226 to 315, and 334 to 422; these read KNNV…MKRV, HSPL…LKRT, and PNGL…CKKW. 6 consecutive transmembrane segments (helical) span residues 130 to 151, 193 to 213, 229 to 249, 290 to 310, 336 to 356, and 394 to 415; these read YFIS…LDRL, GINV…YEAM, LYSY…IYPV, GVLV…GTFE, GLVM…VFPL, and LYKG…SYLV.

It belongs to the mitochondrial carrier (TC 2.A.29) family.

It localises to the mitochondrion inner membrane. This is an uncharacterized protein from Schizosaccharomyces pombe (strain 972 / ATCC 24843) (Fission yeast).